Consider the following 128-residue polypeptide: Holo-[acyl-carrier-protein] synthase (128 aa).

The Mg(2+) site is built by aspartate 8 and glutamate 60.

Belongs to the P-Pant transferase superfamily. AcpS family. Requires Mg(2+) as cofactor.

It is found in the cytoplasm. It carries out the reaction apo-[ACP] + CoA = holo-[ACP] + adenosine 3',5'-bisphosphate + H(+). Transfers the 4'-phosphopantetheine moiety from coenzyme A to a Ser of acyl-carrier-protein. This Anaeromyxobacter sp. (strain K) protein is Holo-[acyl-carrier-protein] synthase.